The primary structure comprises 159 residues: Putative pre-16S rRNA nuclease (159 aa).

It belongs to the YqgF nuclease family.

It is found in the cytoplasm. Its function is as follows. Could be a nuclease involved in processing of the 5'-end of pre-16S rRNA. The protein is Putative pre-16S rRNA nuclease of Thermobifida fusca (strain YX).